Here is a 340-residue protein sequence, read N- to C-terminus: Anthranilate phosphoribosyltransferase (340 aa).

5-phospho-alpha-D-ribose 1-diphosphate-binding positions include Gly-81, 84–85 (GD), Thr-89, 91–94 (NIST), 109–117 (KHGNRGATS), and Ser-121. Gly-81 contributes to the anthranilate binding site. Ser-93 contributes to the Mg(2+) binding site. Residue Asn-112 coordinates anthranilate. Arg-167 serves as a coordination point for anthranilate. 2 residues coordinate Mg(2+): Asp-225 and Glu-226.

It belongs to the anthranilate phosphoribosyltransferase family. Homodimer. Mg(2+) serves as cofactor.

The catalysed reaction is N-(5-phospho-beta-D-ribosyl)anthranilate + diphosphate = 5-phospho-alpha-D-ribose 1-diphosphate + anthranilate. Its pathway is amino-acid biosynthesis; L-tryptophan biosynthesis; L-tryptophan from chorismate: step 2/5. Functionally, catalyzes the transfer of the phosphoribosyl group of 5-phosphorylribose-1-pyrophosphate (PRPP) to anthranilate to yield N-(5'-phosphoribosyl)-anthranilate (PRA). This is Anthranilate phosphoribosyltransferase from Methanocorpusculum labreanum (strain ATCC 43576 / DSM 4855 / Z).